The following is a 74-amino-acid chain: uncharacterized protein (74 aa).

Residues Leu54 to Leu72 traverse the membrane as a helical segment.

The protein resides in the membrane. This is an uncharacterized protein from Saccharomyces cerevisiae (strain ATCC 204508 / S288c) (Baker's yeast).